A 417-amino-acid chain; its full sequence is uncharacterized protein (417 aa).

Residues 10–30 (ALVCFSILSILVLACGCVNTP) traverse the membrane as a helical segment. The interval 84 to 106 (QENHPLQSNQNYEQTNGNFNEEN) is disordered. A compositionally biased stretch (polar residues) spans 86-106 (NHPLQSNQNYEQTNGNFNEEN). Residues 148–168 (LYYIKVIDPIVGGLAGIDIYV) form a helical membrane-spanning segment.

It localises to the cell membrane. This is an uncharacterized protein from Methanocaldococcus jannaschii (strain ATCC 43067 / DSM 2661 / JAL-1 / JCM 10045 / NBRC 100440) (Methanococcus jannaschii).